The sequence spans 158 residues: RNA pyrophosphohydrolase (158 aa).

The 144-residue stretch at 6–149 (GYRLNVGIVL…KRHVYRKVMK (144 aa)) folds into the Nudix hydrolase domain. A Nudix box motif is present at residues 38 to 59 (GGINIGETPEQAMYRELFEEIG).

It belongs to the Nudix hydrolase family. RppH subfamily. The cofactor is a divalent metal cation.

Functionally, accelerates the degradation of transcripts by removing pyrophosphate from the 5'-end of triphosphorylated RNA, leading to a more labile monophosphorylated state that can stimulate subsequent ribonuclease cleavage. In Blochmanniella floridana, this protein is RNA pyrophosphohydrolase.